The sequence spans 363 residues: Protein-arginine kinase (363 aa).

Residues 24 to 255 (IVLSSRIRLA…QQLIAQERAA (232 aa)) enclose the Phosphagen kinase C-terminal domain. ATP is bound by residues 27–31 (SSRIR), His92, Arg126, 177–181 (RASVM), and 208–213 (RGTYGE). The RDXXRA motif of the pArg binding pocket involved in allosteric regulation signature appears at 338 to 343 (RDVRRA).

It belongs to the ATP:guanido phosphotransferase family.

It catalyses the reaction L-arginyl-[protein] + ATP = N(omega)-phospho-L-arginyl-[protein] + ADP + H(+). Its activity is regulated as follows. Appears to be allosterically activated by the binding of pArg-containing polypeptides to the pArg-binding pocket localized in the C-terminal domain of McsB. Its function is as follows. Catalyzes the specific phosphorylation of arginine residues in a large number of proteins. Is part of the bacterial stress response system. Protein arginine phosphorylation has a physiologically important role and is involved in the regulation of many critical cellular processes, such as protein homeostasis, motility, competence, and stringent and stress responses, by regulating gene expression and protein activity. The sequence is that of Protein-arginine kinase from Geobacillus kaustophilus (strain HTA426).